A 316-amino-acid polypeptide reads, in one-letter code: MSTTRHAHLRALAKINLDLRVLGKRPDGFHELRTIFQTISLADTLEISFTPARKTTIELTDVLNIADNLVVRAARMVMDAMRATGRIEMRLTKRIPMGAGLGGGSSDAAAVLLALPVLAGRVLPLPKLSHIGEQLGSDVPFFLLGGAATGIGRGSELFPLPDVPAQSGVVVAPGIHVNTAQAYRDLSRRLSGSLTTELQQNKIFSFQSLTWDTGRLAEARNDFEAVVFEQHPKLAAIKRRLVRAGASAAMMSGSGSALYGLFRDRNAIFRAIELLGEDTTYRISLVSRKRYRALWRRAMSEHTRSNVWPLQSRYNP.

Lysine 14 is an active-site residue. 96 to 106 (PMGAGLGGGSS) is a binding site for ATP. Residue aspartate 138 is part of the active site.

It belongs to the GHMP kinase family. IspE subfamily.

The enzyme catalyses 4-CDP-2-C-methyl-D-erythritol + ATP = 4-CDP-2-C-methyl-D-erythritol 2-phosphate + ADP + H(+). Its pathway is isoprenoid biosynthesis; isopentenyl diphosphate biosynthesis via DXP pathway; isopentenyl diphosphate from 1-deoxy-D-xylulose 5-phosphate: step 3/6. Catalyzes the phosphorylation of the position 2 hydroxy group of 4-diphosphocytidyl-2C-methyl-D-erythritol. The protein is 4-diphosphocytidyl-2-C-methyl-D-erythritol kinase of Solibacter usitatus (strain Ellin6076).